Reading from the N-terminus, the 2158-residue chain is MSFSKMFPGFNSVTEKCATSSSGSFFSELTASISNFSRTLSNVTKVSSQISSHIEDLKPSVTDAASSFTSTCNSVTKLLDKIMTLIEPFIKAYSFVASMYKSICDMVAKIVASIKDKFTLGFNWVLDKSEDVDVLVIAFLIFAISMLIIVFICPSSVLDGVVQMTHIVFNTVGNFFSALYKLDWLPTWSQKFSMMAQANVLPGESMSHSPLSQVVASLIAFGISTLVFVAVPGRPNGLSNPLSKILYSAGSGAQQCNQLFTLFRNMKDCTSQAFSWVLEIIVDIFGFKNPVLSAISATLSTDLFTWMEEVDAVCDPAHRLENFANPAFTIKLQHLREQALKISAYIATHPVAAFMSHRVTAAIXHLDKIYGENCQHTGVGQYRAEPFMVQWYGASGCGKSTSMRLFINDVLDRMEEPKLNRLYAVSKRDAYWSNYAHQTAILMDDMGALRDGAGQCQDIKDLIDIKSTQPAPLPMAAVEDKGRHFTSRYIFATSNLISAPAQCGLTYPDAFERRRDVLVECRKVGEFNTDAPTSHLEFDVVESKRPHAITHRGLSYDDLLEYVVAKCKVHAEISGKLYGATSGKVAQVDVSPEEIIASMDMLNIQDTKQDAKLPVVVVSEEDRVAYSQELTVEALKYAYQGSLNPAAYFPHDMHKQAIFDVLSESAKETFTRWVNDMLYQGCCNENYRWLIKNIPADYIMHFKSFIYASTINERSFDVQKQLPDGMAHRAIDADVDTLICVEQMPAHVQFLYTAFVRYWCRRKMEQPRQSWVVVCYHSIVDYIKNAWYDLPYILRVLIKAGLILIALNGAFGAVTAFCACWQSNTFPSAEGRGGITNESNSISSRKNKGKSIFARSLLAQAKGDMLEKWASDDGFINEGLKKNLVVLRLGEGVYFRGTYVCSGWVMTVAHAFSSLRDGTTFSIIHAQSISKVQYNAKTARFLKEQDIVLLNVGNPDGPKPDIRKHFPVRDGVCFSKGTQGVCVRAVASKDASQGNLEYLRFNVMMSKGYLEKVTYQMDSSSFKLESQASYEYHMNGENGDCGTLLLLPNVQDKQPCIVGIHCASYDEEAAHKGFVASNATAIFRDQLEDLPTGPVKVAMVRCQLLKDLRARDAALFEEKQVAFVGTLPAEQAATVPHKTTLRRSGLFEAFGPAETAPSIISASDKRGEGFDPYVAGIQKYNETAQNFDEDIARLAYEGLRQAILPVLHSQRVPFGKPVTQNEDVVLNGVDGFDYFDGMELSTSCGYPYNKLGMGTSKREFVEPSGDGDRVQLKRTTPIFDDWEALDVEIRKGNFVELVTTQCAKDERLPLEKVFGKRKTRLFEILPFHYNMLVRKYFLDFSASLMASHNALPCKVGINPGGIEWTLLANGFRAVSDTGFSADYSSFDGRAPIFAFQWFCDLVDDYYGSPPGSPDSNARHVLLMMASCHYTICENKVFRLVGGMPSGFALTVIFNSLLNEFYMRYAFISLLRRPHIAAQAIGCKPSDFNKLFVAVYGDDNLVAVPMELHWYTLPAIAQELEMVNVIIKNGIDKNMDVSSSKMLDLSELTFLSRGFKRHRLGYVQAPLKWVSIIEPMYWIRPSVGCPDALAMLENIDTGVREAFHHGPQVFEKLVTDVQNALKERCFPATTFPTYFELEQDWLVEVTGNPAIGLIKELHIAASAFVPLPPGNTVLNFSDGVHTFADRVSFCSSRTAAAQQWDTTTVLVNCTGAKRPTWVRGPTTWRDFEGLIWPYTMAAIKDHICSIVTKGVTKPHVVFVCGNGYAIGPVCAALYCLSTGQYSSQDVVVRLRTIADVTDLSQYPGGCAKYLLKCADTREEELADTCKIAQAKGETPAYIPQGGFSLGNFRIVQGRIDLQLAQRLPFTVGPYGGWGQHTTRELKLLLKDMEKIYQILVQRESFITLYFDYLSSEQVMLLVDFLRLQGFFPRQNDVDYLLKAFKLSKQRHNKENCHTVYFRKPFLSRKMTMGSKEILSATAAESLFGMDVSANVLKSRLLHLQKPIKCSSMELAFKIYCVIQGHLSKEVVTHFQRMYQQDLTEGIIEKVILWLTATLSESFPVDLVDVPLGLDNIEIQDKGFSLNPNNINMNACDAILFQLTECYNRSTKKHVFCRYTTASSLVVAYVLAHRHQTIDELPSFYATHPDVLLLTPILTGYKAP.

A propeptide spans 1-105 (MSFSKMFPGF…VASMYKSICD (105 aa)) (removed in mature form). One can recognise an SF3 helicase domain in the interval 367–534 (DKIYGENCQH…GEFNTDAPTS (168 aa)). 393 to 400 (GASGCGKS) lines the ATP pocket. Residues 801 to 821 (GLILIALNGAFGAVTAFCACW) form a helical membrane-spanning segment. Ser844 is subject to O-(5'-phospho-RNA)-serine. Residues 870–1083 (ASDDGFINEG…FVASNATAIF (214 aa)) enclose the Peptidase C3 domain. Residues His910, Asp946, and Cys1041 each act as for picornain 3C-like protease activity in the active site. A RdRp catalytic domain is found at 1376-1511 (DTGFSADYSS…AVPMELHWYT (136 aa)).

Its subcellular location is the host membrane. It catalyses the reaction RNA(n) + a ribonucleoside 5'-triphosphate = RNA(n+1) + diphosphate. In terms of biological role, picornain 3C-like protease is a thiol protease that probably cleaves the polyprotein. This Capsicum annuum (Capsicum pepper) protein is RNA1 polyprotein.